A 313-amino-acid chain; its full sequence is Ketimine reductase mu-crystallin (313 aa).

Residue Arg-47 participates in 3,3',5-triiodo-L-thyronine binding. 13 residues coordinate NADPH: Ser-90, His-91, Arg-118, Ala-143, Val-145, Gln-146, Asn-167, Arg-168, Thr-169, Asn-172, Thr-204, Met-205, and Val-225. Glu-256 contacts 3,3',5-triiodo-L-thyronine. An NADPH-binding site is contributed by Ser-291.

The protein belongs to the ornithine cyclodeaminase/mu-crystallin family. In terms of assembly, homodimer. Binds the thyroid hormone triiodothyronine (T3); T3 binding inhibits enzymatic activity.

It is found in the cytoplasm. It carries out the reaction L-pipecolate + NADP(+) = Delta(1)-piperideine-2-carboxylate + NADPH + H(+). It catalyses the reaction L-pipecolate + NAD(+) = Delta(1)-piperideine-2-carboxylate + NADH + H(+). The catalysed reaction is L-proline + NADP(+) = 1-pyrroline-2-carboxylate + NADPH + H(+). The enzyme catalyses L-proline + NAD(+) = 1-pyrroline-2-carboxylate + NADH + H(+). It carries out the reaction (3R)-1,4-thiomorpholine-3-carboxylate + NAD(+) = 3,4-dehydrothiomorpholine-3-carboxylate + NADH + 2 H(+). It catalyses the reaction (3R)-1,4-thiomorpholine-3-carboxylate + NADP(+) = 3,4-dehydrothiomorpholine-3-carboxylate + NADPH + 2 H(+). The catalysed reaction is (S)-cystathionine ketimine + NADH + 2 H(+) = (3R,5S)-2,3,5,6,7-pentahydro-1,4-thiazepine-3,5-dicarboxylate + NAD(+). The enzyme catalyses (S)-cystathionine ketimine + NADPH + 2 H(+) = (3R,5S)-2,3,5,6,7-pentahydro-1,4-thiazepine-3,5-dicarboxylate + NADP(+). It carries out the reaction (R)-lanthionine ketimine + NADPH + 2 H(+) = (3R,5R)-1,4-thiomorpholine-3,5-dicarboxylate + NADP(+). It catalyses the reaction Delta(2)-thiazoline-2-carboxylate + NADPH + 2 H(+) = L-thiazolidine-2-carboxylate + NADP(+). In terms of biological role, catalyzes the NAD(P)H-dependent reduction of imine double bonds of a number of cyclic ketimine substrates, including sulfur-containing cyclic ketimines. Under physiological conditions, it efficiently catalyzes delta(1)-piperideine-2-carboxylate (P2C) and delta(1)-pyrroline-2-carboxylate (Pyr2C) reduction, suggesting a central role in lysine and glutamate metabolism. Additional substrates are delta(2)-thiazoline-2-carboxylate (T2C), 3,4-dehydrothiomorpholine-3-carboxylate (AECK), and (R)-lanthionine ketimine (LK) that is reduced at very low rate compared to other substrates. Also catalyzes the NAD(P)H-dependent reduction of (S)-cystathionine ketimine (CysK). In Rattus norvegicus (Rat), this protein is Ketimine reductase mu-crystallin.